The following is a 75-amino-acid chain: uncharacterized protein (75 aa).

Residues 4–26 (PSLLFLGFSGVLAFGEVGWVGVY) form a helical membrane-spanning segment.

Its subcellular location is the membrane. This is an uncharacterized protein from Treponema pallidum (strain Nichols).